A 102-amino-acid chain; its full sequence is DET1- and DDB1-associated protein 1 (102 aa).

Residue Ala-2 is modified to N-acetylalanine. Ser-33 carries the post-translational modification Phosphoserine. 2 stretches are compositionally biased toward basic and acidic residues: residues 66 to 75 and 91 to 102; these read KNAAKKRDQE and ARTDSPDMHEDT. The segment at 66-102 is disordered; the sequence is KNAAKKRDQEQVELEGESSAPPRKVARTDSPDMHEDT. Ser-95 bears the Phosphoserine mark.

It belongs to the DDA1 family. In terms of assembly, component of numerous DCX (DDB1-CUL4-X-box) E3 ubiquitin-protein ligase complexes which consist of a core of DDB1, cullin-4 (CUL4A or CUL4B), DDA1 and RBX1. Component of the DCX(DCAF15) complex, also named CLR4(DCAF15) complex, composed of DCAF15, DDB1, cullin-4 (CUL4A or CUL4B), DDA1 and RBX1. Part of the DDD core complex containing DET1, DDA1 and DDB1; the DDD core complex recruits a specific UBE2E enzyme, such as UBE2E1, UBE2E2 UBE2E3, to form specific DDD-E2 complexes.

The protein operates within protein modification; protein ubiquitination. Functionally, functions as a component of numerous distinct DCX (DDB1-CUL4-X-box) E3 ubiquitin-protein ligase complexes which mediate the ubiquitination and subsequent proteasomal degradation of target proteins. In the DCX complexes, acts as a scaffolding subunit required to stabilize the complex. This is DET1- and DDB1-associated protein 1 from Bos taurus (Bovine).